Reading from the N-terminus, the 213-residue chain is N-(5'-phosphoribosyl)anthranilate isomerase (213 aa).

This sequence belongs to the TrpF family.

The catalysed reaction is N-(5-phospho-beta-D-ribosyl)anthranilate = 1-(2-carboxyphenylamino)-1-deoxy-D-ribulose 5-phosphate. The protein operates within amino-acid biosynthesis; L-tryptophan biosynthesis; L-tryptophan from chorismate: step 3/5. The polypeptide is N-(5'-phosphoribosyl)anthranilate isomerase (Methylibium petroleiphilum (strain ATCC BAA-1232 / LMG 22953 / PM1)).